The chain runs to 1118 residues: Isoleucine--tRNA ligase (1118 aa).

A 'HIGH' region motif is present at residues 64-74 (PFANGLPHYGH). The short motif at 647-651 (KLSKR) is the 'KMSKS' region element. K650 serves as a coordination point for ATP.

This sequence belongs to the class-I aminoacyl-tRNA synthetase family. IleS type 2 subfamily. Monomer. Requires Zn(2+) as cofactor.

It is found in the cytoplasm. The enzyme catalyses tRNA(Ile) + L-isoleucine + ATP = L-isoleucyl-tRNA(Ile) + AMP + diphosphate. Its function is as follows. Catalyzes the attachment of isoleucine to tRNA(Ile). As IleRS can inadvertently accommodate and process structurally similar amino acids such as valine, to avoid such errors it has two additional distinct tRNA(Ile)-dependent editing activities. One activity is designated as 'pretransfer' editing and involves the hydrolysis of activated Val-AMP. The other activity is designated 'posttransfer' editing and involves deacylation of mischarged Val-tRNA(Ile). The protein is Isoleucine--tRNA ligase of Ehrlichia ruminantium (strain Gardel).